The chain runs to 84 residues: U8-theraphotoxin-Hhn1g (84 aa).

A signal peptide spans 1–21 (MKVVLLVCLVWMMAMMELVSC). 5 disulfide bridges follow: Cys-23–Cys-35, Cys-29–Cys-44, Cys-34–Cys-67, Cys-54–Cys-75, and Cys-69–Cys-81.

It belongs to the AVIT (prokineticin) family. As to expression, expressed by the venom gland.

It localises to the secreted. The sequence is that of U8-theraphotoxin-Hhn1g from Cyriopagopus hainanus (Chinese bird spider).